A 478-amino-acid chain; its full sequence is Glutamate--tRNA ligase 1 (478 aa).

The 'HIGH' region motif lies at 10–20; that stretch reads PSPTGFLHIGG. The short motif at 242 to 246 is the 'KMSKS' region element; sequence KLSKR. Lys245 serves as a coordination point for ATP.

Belongs to the class-I aminoacyl-tRNA synthetase family. Glutamate--tRNA ligase type 1 subfamily. Monomer.

It is found in the cytoplasm. The enzyme catalyses tRNA(Glu) + L-glutamate + ATP = L-glutamyl-tRNA(Glu) + AMP + diphosphate. Its function is as follows. Catalyzes the attachment of glutamate to tRNA(Glu) in a two-step reaction: glutamate is first activated by ATP to form Glu-AMP and then transferred to the acceptor end of tRNA(Glu). This is Glutamate--tRNA ligase 1 from Orientia tsutsugamushi (strain Boryong) (Rickettsia tsutsugamushi).